The following is a 160-amino-acid chain: H/ACA ribonucleoprotein complex subunit 2 (160 aa).

Ser-15 carries the phosphoserine modification. A Phosphothreonine modification is found at Thr-23.

Belongs to the eukaryotic ribosomal protein eL8 family. In terms of assembly, component of the box H/ACA small nucleolar ribonucleoprotein (H/ACA snoRNP) complex consisting of Nop60B, Gar1, NPH2 and Nop10, and associated with H/ACA-type snoRNAs.

The protein localises to the nucleus. It localises to the nucleolus. Its function is as follows. Component of the box H/ACA small nucleolar ribonucleoprotein (H/ACA snoRNP) complex, which catalyzes pseudouridylation of rRNA. This involves the isomerization of uridine such that the ribose is subsequently attached to C5, instead of the normal N1. Pseudouridine ('psi') residues may serve to stabilize the conformation of rRNAs. Required for ribosome biogenesis. H/ACA snoRNP complex-dependent ribosome biogenesis is important in female germline cell differentiation during oogenesis. This chain is H/ACA ribonucleoprotein complex subunit 2, found in Drosophila melanogaster (Fruit fly).